Here is a 650-residue protein sequence, read N- to C-terminus: 1-deoxy-D-xylulose-5-phosphate synthase (650 aa).

Thiamine diphosphate contacts are provided by residues H73 and 113-115; that span reads SHA. Residue D145 coordinates Mg(2+). Thiamine diphosphate is bound by residues 146-147, N175, Y287, and E369; that span reads GA. Mg(2+) is bound at residue N175. A disordered region spans residues 629 to 650; that stretch reads SARPLPEDAERVPMRAEDDEQA. A compositionally biased stretch (basic and acidic residues) spans 633–644; it reads LPEDAERVPMRA.

The protein belongs to the transketolase family. DXPS subfamily. In terms of assembly, homodimer. It depends on Mg(2+) as a cofactor. Thiamine diphosphate serves as cofactor.

The enzyme catalyses D-glyceraldehyde 3-phosphate + pyruvate + H(+) = 1-deoxy-D-xylulose 5-phosphate + CO2. The protein operates within metabolic intermediate biosynthesis; 1-deoxy-D-xylulose 5-phosphate biosynthesis; 1-deoxy-D-xylulose 5-phosphate from D-glyceraldehyde 3-phosphate and pyruvate: step 1/1. Catalyzes the acyloin condensation reaction between C atoms 2 and 3 of pyruvate and glyceraldehyde 3-phosphate to yield 1-deoxy-D-xylulose-5-phosphate (DXP). In Clavibacter sepedonicus (Clavibacter michiganensis subsp. sepedonicus), this protein is 1-deoxy-D-xylulose-5-phosphate synthase.